The following is a 73-amino-acid chain: MKADIHPAYHTIKVVMTDGTEYETRSTWGSEGAVMNLEIDPKSHPAWTGGNQQLMDRGGRVSKFNKRFGGLGL.

This sequence belongs to the bacterial ribosomal protein bL31 family. Type A subfamily. In terms of assembly, part of the 50S ribosomal subunit.

Binds the 23S rRNA. In Agrobacterium fabrum (strain C58 / ATCC 33970) (Agrobacterium tumefaciens (strain C58)), this protein is Large ribosomal subunit protein bL31.